The primary structure comprises 61 residues: Large ribosomal subunit protein uL30 (61 aa).

It belongs to the universal ribosomal protein uL30 family. In terms of assembly, part of the 50S ribosomal subunit.

The chain is Large ribosomal subunit protein uL30 from Saccharophagus degradans (strain 2-40 / ATCC 43961 / DSM 17024).